The sequence spans 170 residues: MDLEAMLASYPDFPKKGVLFKDIGPILRDPAALAWAADELLRRYPPADFDVIAGIESRGFILATIMSARSGKGMVMIRKPGKLPGKTVKLAYKTEYGEDILEAQHGSVKSGERVIICDDLLATGGTAAAAASLVEQVGGKVAGLAFIVELAKLCGADKIAGYNRKSLVVY.

The protein belongs to the purine/pyrimidine phosphoribosyltransferase family. Homodimer.

It localises to the cytoplasm. The enzyme catalyses AMP + diphosphate = 5-phospho-alpha-D-ribose 1-diphosphate + adenine. It participates in purine metabolism; AMP biosynthesis via salvage pathway; AMP from adenine: step 1/1. Its function is as follows. Catalyzes a salvage reaction resulting in the formation of AMP, that is energically less costly than de novo synthesis. This chain is Adenine phosphoribosyltransferase, found in Cenarchaeum symbiosum (strain A).